An 84-amino-acid chain; its full sequence is Small ribosomal subunit protein bS16 (84 aa).

Belongs to the bacterial ribosomal protein bS16 family.

The chain is Small ribosomal subunit protein bS16 from Paraburkholderia phytofirmans (strain DSM 17436 / LMG 22146 / PsJN) (Burkholderia phytofirmans).